The primary structure comprises 207 residues: Large ribosomal subunit protein uL3 (207 aa).

The segment at 129-152 is disordered; it reads AGGPAGHGSRFQRHPGSIGSNTTP.

Belongs to the universal ribosomal protein uL3 family. As to quaternary structure, part of the 50S ribosomal subunit. Forms a cluster with proteins L14 and L19.

Its function is as follows. One of the primary rRNA binding proteins, it binds directly near the 3'-end of the 23S rRNA, where it nucleates assembly of the 50S subunit. The protein is Large ribosomal subunit protein uL3 of Leptospira biflexa serovar Patoc (strain Patoc 1 / ATCC 23582 / Paris).